A 40-amino-acid polypeptide reads, in one-letter code: Unknown protein from spot 207 of 2D-PAGE of etiolated coleoptile (40 aa).

Belongs to the GST superfamily. HSP26 family.

This is Unknown protein from spot 207 of 2D-PAGE of etiolated coleoptile from Zea mays (Maize).